The sequence spans 351 residues: Apolipoprotein L4 (351 aa).

The first 21 residues, 1-21 (MEGAALLKIFVVCIWVQQNHP), serve as a signal peptide directing secretion.

Belongs to the apolipoprotein L family. In terms of tissue distribution, widely expressed; the highest levels are in spinal cord, placenta, adrenal gland; also detected in spleen, bone marrow, uterus, trachea, mammary gland and testis; levels are low in brain, heart and pancreas.

Its subcellular location is the secreted. Functionally, may play a role in lipid exchange and transport throughout the body. May participate in reverse cholesterol transport from peripheral cells to the liver. The sequence is that of Apolipoprotein L4 (APOL4) from Homo sapiens (Human).